A 124-amino-acid chain; its full sequence is Protein BEX3 (124 aa).

The interval 1 to 56 is disordered; the sequence is MANVHQENEEMEQPLQNGQEDRPVGGGEGHQPAANNNNNNHNHNHNHHRRGQARRL. The span at 42–53 shows a compositional bias: basic residues; that stretch reads NHNHNHHRRGQA. The segment at 81-106 is interaction with p75NTR/NGFR; the sequence is EMFMEEMREIRRKLRELQLRNCLRIL. Residues 81-124 form an interaction with 14-3-3 epsilon region; it reads EMFMEEMREIRRKLRELQLRNCLRILMGELSNHHDHHDEFCLMP. Residues 90-100 carry the Nuclear export signal motif; sequence IRRKLRELQLR. The segment at 113–117 is his cluster; the sequence is HHDHH. Zn(2+) is bound at residue cysteine 121.

Belongs to the BEX family. In terms of assembly, self-associates. Binds to the DEATH domain of p75NTR/NGFR. Interacts with 14-3-3 epsilon (YWHAE). Interacts with DIABLO/SMAC. Post-translationally, ubiquitinated. Degraded by the proteasome. In terms of tissue distribution, widely expressed.

It is found in the nucleus. The protein localises to the cytoplasm. The protein resides in the cytosol. In terms of biological role, may be a signaling adapter molecule involved in NGFR/p75NTR-mediated apoptosis induced by NGF. Plays a role in zinc-triggered neuronal death. In absence of reductive stress, acts as a pseudosubstrate for the CRL2(FEM1B) complex: associates with FEM1B via zinc, thereby preventing association between FEM1B and its substrates. The chain is Protein BEX3 from Mus musculus (Mouse).